The chain runs to 110 residues: UPF0339 protein SO_3888 (110 aa).

2 repeat units span residues 10–58 and 61–109.

This sequence belongs to the UPF0339 family. Duplicated subfamily.

This is UPF0339 protein SO_3888 from Shewanella oneidensis (strain ATCC 700550 / JCM 31522 / CIP 106686 / LMG 19005 / NCIMB 14063 / MR-1).